Consider the following 427-residue polypeptide: METTISEIHVENKDEKRSAEGSPGAERQKEKASMLCFKRRKKAAKALKPKAGSEAADVARKCPQEAGASDQPEPTRGAWASLKRLVTRRKRSESSKQQKPLEGEMQPAINAEDADLSKKKAKSRLKIPCIKFPRGPKRSNHSKIIEDSDCSIKVQEEAEILDIQTQTPLNDQATKAKSTQDLSEGISRKDGDEVCESNVSNSTTSGEKVISVELGLDNGHSAIQTGTLILEEIETIKEKQDVQPQQASPLETSETDHQQPVLSDVPPLPAIPDQQIVEEASNSTLESAPNGKDYESTEIVAEETKPKDTELSQESDFKENGITEEKSKSEESKRMEPIAIIITDTEISEFDVTKSKNVPKQFLISAENEQVGVFANDNGFEDRTSEQYETLLIETASSLVKNAIQLSIEQLVNEMASDDNKINNLLQ.

A disordered region spans residues 1–122 (METTISEIHV…DADLSKKKAK (122 aa)). An essential to the intracellular anchoring function region spans residues 1-170 (METTISEIHV…LDIQTQTPLN (170 aa)). Basic and acidic residues predominate over residues 8–19 (IHVENKDEKRSA). Ser22 carries the post-translational modification Phosphoserine. A lipid anchor (S-palmitoyl cysteine) is attached at Cys36. The segment covering 37-48 (FKRRKKAAKALK) has biased composition (basic residues). Residues 76–96 (RGAWASLKRLVTRRKRSESSK) carry the AKAP CaM-binding motif. The span at 92–102 (SESSKQQKPLE) shows a compositional bias: basic and acidic residues. Cys129 is lipidated: S-palmitoyl cysteine. Polar residues-rich tracts occupy residues 171–182 (DQATKAKSTQDL) and 242–252 (VQPQQASPLET). 3 disordered regions span residues 171-205 (DQATKAKSTQDLSEGISRKDGDEVCESNVSNSTTS), 239-269 (KQDVQPQQASPLETSETDHQQPVLSDVPPLP), and 281-333 (SNST…EESK). Residues 302–333 (EETKPKDTELSQESDFKENGITEEKSKSEESK) are compositionally biased toward basic and acidic residues. The PKA-RII subunit binding domain stretch occupies residues 392-405 (LIETASSLVKNAIQ). The tract at residues 410-427 (QLVNEMASDDNKINNLLQ) is tethers NFATC2 to CRAC channels.

As to quaternary structure, binding protein for dimer of the RII-beta regulatory subunit of cAMP-dependent protein kinase (PKA) and also for the protein kinase C (PKC) and the phosphatase calcineurin (PP2B). Each enzyme is inhibited when bound to the anchoring protein. Also binds the beta2-adrenergic receptor. Part of a complex containing AKAP5, ADCY5, ADCY6 and PDE4C. Interacts with ADCY8, and enhances its phosphorylation at lipid rafts. Interacts with ORAI1 (isoform alpha) (via N-terminus) upon store depletion and in response to LTC4. Does not interact with ORAI2 and ORAI3 paralogs. Interacts (via leucine zipper domain) with NFATC2/NFAT1. Interacts with calmodulin; the interaction is calcium-independent. Interacts with KCNQ2; the interaction may help KCNQ2 channel complex to retain calcium-bound calmodulin. Interacts with KCNK2; the channel is recruited to postsynaptic microdomains by AKAP5 where it can integrate neurotransmitter receptor signals. Part of a complex composed of AKAP5 and ADRB2. Palmitoylated. Palmitoylation at Cys-36 and Cys-129 play a key role in the targeting of AKAP5 to lipid rafts. Palmitoylation by ZDHHC2 is required for AKAP5 function in LTP-stimulated recycling endosome exocytosis. Predominantly in the cerebral cortex and the postsynaptic densities of the forebrain, and to a lesser extent in adrenal medulla, lung and anterior pituitary.

It is found in the postsynaptic recycling endosome membrane. Its subcellular location is the cell projection. It localises to the dendrite. The protein localises to the postsynaptic cell membrane. Multivalent scaffold protein that anchors the cAMP-dependent protein kinase/PKA to cytoskeletal and/or organelle-associated proteins, targeting the signal carried by cAMP to specific intracellular effectors. Association with the beta2-adrenergic receptor (beta2-AR) not only regulates beta2-AR signaling pathway, but also the activation by PKA by switching off the beta2-AR signaling cascade. Plays a role in long term synaptic potentiation by regulating protein trafficking from the dendritic recycling endosomes to the plasma membrane and controlling both structural and functional plasticity at excitatory synapses. In hippocampal pyramidal neurons, recruits KCNK2/TREK-1 channel at postsynaptic dense bodies microdomains and converts it to a leak channel no longer sensitive to stimulation by arachidonic acid, acidic pH or mechanical stress, nor inhibited by Gq-coupled receptors but still under the negative control of Gs-coupled receptors. Associates with ORAI1 pore-forming subunit of CRAC channels in Ca(2+) signaling microdomains where it recruits NFATC2/NFAT1 and couples store-operated Ca(2+) influx to calmodulin and calcineurin signaling and activation of NFAT-dependent transcriptional responses. The sequence is that of A-kinase anchor protein 5 (AKAP5) from Homo sapiens (Human).